A 128-amino-acid polypeptide reads, in one-letter code: NADH-quinone oxidoreductase subunit A (128 aa).

3 helical membrane passes run 9 to 29, 68 to 88, and 96 to 116; these read FPIA…LALA, LLFI…VLLL, and LGWA…AGLV.

Belongs to the complex I subunit 3 family. NDH-1 is composed of 14 different subunits. Subunits NuoA, H, J, K, L, M, N constitute the membrane sector of the complex.

It is found in the cell inner membrane. It carries out the reaction a quinone + NADH + 5 H(+)(in) = a quinol + NAD(+) + 4 H(+)(out). In terms of biological role, NDH-1 shuttles electrons from NADH, via FMN and iron-sulfur (Fe-S) centers, to quinones in the respiratory chain. The immediate electron acceptor for the enzyme in this species is believed to be ubiquinone. Couples the redox reaction to proton translocation (for every two electrons transferred, four hydrogen ions are translocated across the cytoplasmic membrane), and thus conserves the redox energy in a proton gradient. This is NADH-quinone oxidoreductase subunit A from Anaeromyxobacter sp. (strain Fw109-5).